A 178-amino-acid polypeptide reads, in one-letter code: MFLKVQLPWNVMIPAENMDAKGLMLKRAILVELLEAFASKKATKELGYYVAVTTLDKIGEGKIREHTGEVLFPVMFSGMTFKIFKGEIIHGVVHKVLKHGVFMRCGPIENVYLSYTKMPDYKYIPGENPIFMNEKTSRIQVETTVRVVVIGIKWMEVEREFQALASLEGDYLGPLSEE.

Belongs to the eukaryotic RPB7/RPC8 RNA polymerase subunit family. In terms of assembly, component of the RNA polymerase V complex.

Its subcellular location is the nucleus. In terms of biological role, DNA-dependent RNA polymerase catalyzes the transcription of DNA into RNA using the four ribonucleoside triphosphates as substrates. Component of RNA polymerase V involved in RNA-directed DNA methylation-dependent (RdDM) silencing of endogenous repeated sequences, including transposable elements. The protein is DNA-directed RNA polymerase V subunit 7 (NRPE7) of Arabidopsis thaliana (Mouse-ear cress).